An 871-amino-acid chain; its full sequence is Patatin-like phospholipase domain-containing protein CNBE2340 (871 aa).

The interval 20-53 (NEDSPLSPRSFSLPPESPQLSTASPIHQRVSRKR) is disordered. Residues 23-33 (SPLSPRSFSLP) show a composition bias toward low complexity. The chain crosses the membrane as a helical span at residues 68 to 88 (WPLLFFIFFIIYLEFSAYVIT). The 193-residue stretch at 243–435 (LCLSGGASFG…REDIPLGSLH (193 aa)) folds into the PNPLA domain. Residues 274-278 (GTSAG) carry the GXSXG motif. Catalysis depends on Ser-276, which acts as the Nucleophile. Asp-422 (proton acceptor) is an active-site residue. Disordered stretches follow at residues 586 to 707 (ALSH…NFGD), 720 to 748 (LSSP…QRFR), and 760 to 871 (VSES…QDGA). 2 stretches are compositionally biased toward polar residues: residues 594-606 (NDPA…TNPE) and 687-706 (PTHS…SNFG). A compositionally biased stretch (low complexity) spans 721–748 (SSPFRSIRSNTSSSSNNVQSPSSSQRFR). Positions 798 to 820 (VESHSDRSEDEMLHSGANVKEEY) are enriched in basic and acidic residues.

It belongs to the PLPL family.

It localises to the membrane. In terms of biological role, probable lipid hydrolase. The sequence is that of Patatin-like phospholipase domain-containing protein CNBE2340 from Cryptococcus neoformans var. neoformans serotype D (strain B-3501A) (Filobasidiella neoformans).